A 397-amino-acid polypeptide reads, in one-letter code: MAIRIKLKPGRERSLERRHPWVFSNGIHNVNGGKPQAGDTVDVVAHDGRWLGRGAWSPESQIQVRIWTFDKEEAIDADFFARRIQRAQAGREDLIREQGLTGYRLIAAESDGLPGITIDRYADVLVCQLLNTGAEKWRDTLVEQLALQFPGCAIYERSDVDSRKKEGLAPVQGLLHGELPAMPIIIEENGIKIAVDVVKGHKTGFYLDQRDNRAIAARFVKGKSVLNCFCYTGTFGLYAAKAGAASIENVDVSALALQTARDNMAINGLDDSHVNYHEADVFKLLRQYRDEGKTFDVIVLDPPKFADNKSQLNGACRGYKDINMIAMQLLNPGGILLTFSCSGLMESDLFQKVVADAALDAKREVQFVERMHQASDHPISSAFPEGYYLKGLVARVW.

In terms of domain architecture, PUA spans 2–80 (AIRIKLKPGR…KEEAIDADFF (79 aa)).

This sequence belongs to the methyltransferase superfamily. RlmI family.

The protein resides in the cytoplasm. The catalysed reaction is cytidine(1962) in 23S rRNA + S-adenosyl-L-methionine = 5-methylcytidine(1962) in 23S rRNA + S-adenosyl-L-homocysteine + H(+). Functionally, specifically methylates the cytosine at position 1962 (m5C1962) of 23S rRNA. The chain is Ribosomal RNA large subunit methyltransferase I from Shewanella denitrificans (strain OS217 / ATCC BAA-1090 / DSM 15013).